The following is a 209-amino-acid chain: Thymidylate kinase (209 aa).

11 to 18 (GIEGAGKT) contributes to the ATP binding site.

The protein belongs to the thymidylate kinase family.

The enzyme catalyses dTMP + ATP = dTDP + ADP. Its function is as follows. Phosphorylation of dTMP to form dTDP in both de novo and salvage pathways of dTTP synthesis. In Pasteurella multocida (strain Pm70), this protein is Thymidylate kinase (tmk).